The primary structure comprises 158 residues: Glutathione peroxidase homolog BsaA (158 aa).

C36 is an active-site residue.

Belongs to the glutathione peroxidase family.

This Staphylococcus aureus (strain COL) protein is Glutathione peroxidase homolog BsaA (bsaA).